Here is a 1033-residue protein sequence, read N- to C-terminus: MARASCAWHSLWLLQWTPLFLGPSAVPPVWALNLDSEKFSVYAGPNGSHFGFSVDFHKDKHGSVSIVVGAPRALNASQEETGAVFLCPWKANGGKCNPLLFDLRDETRNLGFQIFQTFKTGQGLGASVVSWNDVIVACAPWQHWNVLEKRDEAEKTPVGGCFLAQLQSGGRAEYSPCRANTMSSVYAESFRGDKRYCEAGFSLAVTQAGELVLGAPGGYFFLGLLARVPIENIISSYRPGTLLWHVSNQRFTYDNSNPVFFDGYRGYSVAVGEFDGDPSTTEYVSGAPTWSWTLGAVEILDSYYQPLHRLHGEQMASYFGHSVAVTDVNGDGRHDLLVGAPLYMESRADRKLAEVGRVYLFLQPKGPQALSTPTLLLTGTQLYGRFGSAIAPLGDLNRDGYNDIAVAAPYGGPSGQGQVLIFLGQSEGLSPRPSQVLDSPFPTGSGFGFSLRGAVDIDDNGYPDLIVGAYGASKVAVYRAQPVVMATVQLMVQDSLNPTLKNCVLDQTKTPVSCFNIQMCVGATGHNIPQKLHLKAELQLDLQKPRQGRRVLLLASQQASLTLSLDLGGRDKPICHTTGAFLRDEADFRDKLSPIVLSLNVSLPPEETGGAPAVVLHGETHVQEQTRIILDCGEDDLCVPQLRLTATAGDSPLLIGADNVLELKIEAANDGEGAYEAELAVHLPPGAHYMRALSNIEGFERLVCTQKKENESRVALCELGNPMKKDTRIGITMLVSVENLEEAGESVSFQLQVRSKNSQNPNSKVVMLPVAIQAEATVELRGNSFPASLVVAAEEGDREQEDLDRWVSRLEHTYELHNIGPGTVNGLRLLIHIPGQSQPSDLLYILDVQPQGGLLCSTQPSPKVDWKLSTPSPSSIRPVHHQRERRQAFLQGPKPGQQDPVLVSCDGSASCTVVECELREMVRGQRAMVTVQVMLGLSSLRQRPQEQFVLQSHAWFNVSSLPYSVPVVSLPSGQARVQTQLLRALEERAIPVWWVLVGVLGGLLLLTLLVLAMWKAGFFKRNRPPLEEDEEEE.

The first 31 residues, 1–31 (MARASCAWHSLWLLQWTPLFLGPSAVPPVWA), serve as a signal peptide directing secretion. Topologically, residues 32–988 (LNLDSEKFSV…TQLLRALEER (957 aa)) are extracellular. FG-GAP repeat units follow at residues 35 to 96 (DSEK…GGKC), 109 to 173 (NLGF…GRAE), 184 to 237 (SVYA…ISSY), 252 to 304 (TYDN…DSYY), 305 to 370 (QPLH…PQAL), 372 to 431 (TPTL…GLSP), and 434 to 495 (SQVL…VQDS). 2 N-linked (GlcNAc...) asparagine glycosylation sites follow: Asn-46 and Asn-75. Cystine bridges form between Cys-87/Cys-96, Cys-138/Cys-161, and Cys-177/Cys-197. Positions 273, 275, 277, 280, 282, 327, 329, 331, 333, 335, 395, 399, 401, 403, 456, 458, 460, 462, and 464 each coordinate Ca(2+). Cystine bridges form between Cys-503/Cys-514 and Cys-520/Cys-575. An N-linked (GlcNAc...) asparagine glycan is attached at Asn-600. Cystine bridges form between Cys-632–Cys-638, Cys-704–Cys-717, Cys-856–Cys-916, and Cys-905–Cys-911. Asn-710 carries an N-linked (GlcNAc...) asparagine glycan. The N-linked (GlcNAc...) asparagine glycan is linked to Asn-957. Residues 989-1014 (AIPVWWVLVGVLGGLLLLTLLVLAMW) traverse the membrane as a helical segment. Residues 1015–1033 (KAGFFKRNRPPLEEDEEEE) lie on the Cytoplasmic side of the membrane. Residues 1017 to 1021 (GFFKR) carry the GFFKR motif motif.

This sequence belongs to the integrin alpha chain family. Heterodimer of an alpha and a beta subunit. The alpha subunit is composed of a heavy and a light chain linked by a disulfide bond. Alpha-IIb associates with beta-3. Directly interacts with RNF181. Interacts (via C-terminus cytoplasmic tail region) with CIB1; the interaction is direct and calcium-dependent. Interacts (via C-terminus cytoplasmic tail region) with CIB2, CIB3 and CIB4; the interactions are stabilized/increased in a calcium and magnesium-dependent manner. ITGA2B:ITGB3 interacts with PPIA/CYPA; the interaction is ROS and PPIase activity-dependent and is increased in the presence of thrombin. ITGA2B:ITGB3 interacts with SELP (via C-type lectin domain); the interaction mediates cell-cell interaction and adhesion. Cleaved by ELANE; the cleavage promotes activation of platelet fibrinogen receptor integrin alpha-IIb/beta-3.

Its subcellular location is the membrane. Integrin alpha-IIb/beta-3 is a receptor for fibronectin, fibrinogen, plasminogen, prothrombin, thrombospondin and vitronectin. It recognizes the sequence R-G-D in a wide array of ligands. It recognizes the sequence H-H-L-G-G-G-A-K-Q-A-G-D-V in fibrinogen gamma chain. Following activation integrin alpha-IIb/beta-3 brings about platelet/platelet interaction through binding of soluble fibrinogen. This step leads to rapid platelet aggregation which physically plugs ruptured endothelial cell surface. The polypeptide is Integrin alpha-IIb (Itga2b) (Mus musculus (Mouse)).